A 972-amino-acid polypeptide reads, in one-letter code: Aminopeptidase N (972 aa).

The Cytoplasmic segment spans residues 2–17 (TSQGRTRTLLNLTPIR). Residues 18–39 (LIVALFLVAAAVGLSIGLTYYF) traverse the membrane as a helical; Signal-anchor for type II membrane protein segment. The Extracellular portion of the chain corresponds to 40–972 (TRKAFDTSEK…LAAFFKKATL (933 aa)). The segment covering 47–62 (SEKPGKDDTGGKDKDN) has biased composition (basic and acidic residues). The tract at residues 47 to 66 (SEKPGKDDTGGKDKDNSPSA) is disordered. An N-linked (GlcNAc...) asparagine glycan is attached at Asn99. Substrate is bound at residue Glu208. Asn227 is a glycosylation site (N-linked (GlcNAc...) asparagine). Residue 343-347 (GAMEN) coordinates substrate. His379 provides a ligand contact to Zn(2+). Glu380 (proton acceptor) is an active-site residue. Zn(2+)-binding residues include His383 and Glu402. The N-linked (GlcNAc...) asparagine glycan is linked to Asn549. 2 disulfide bridges follow: Cys759–Cys766 and Cys804–Cys840. Asn858 carries N-linked (GlcNAc...) asparagine glycosylation.

It belongs to the peptidase M1 family. Zn(2+) serves as cofactor.

The protein resides in the membrane. The enzyme catalyses Release of an N-terminal amino acid, Xaa-|-Yaa- from a peptide, amide or arylamide. Xaa is preferably Ala, but may be most amino acids including Pro (slow action). When a terminal hydrophobic residue is followed by a prolyl residue, the two may be released as an intact Xaa-Pro dipeptide.. The sequence is that of Aminopeptidase N from Haemonchus contortus (Barber pole worm).